Here is a 361-residue protein sequence, read N- to C-terminus: Phenylalanine--tRNA ligase alpha subunit (361 aa).

Glu-260 is a binding site for Mg(2+).

It belongs to the class-II aminoacyl-tRNA synthetase family. Phe-tRNA synthetase alpha subunit type 1 subfamily. Tetramer of two alpha and two beta subunits. Requires Mg(2+) as cofactor.

The protein localises to the cytoplasm. The catalysed reaction is tRNA(Phe) + L-phenylalanine + ATP = L-phenylalanyl-tRNA(Phe) + AMP + diphosphate + H(+). This Bartonella bacilliformis (strain ATCC 35685 / KC583 / Herrer 020/F12,63) protein is Phenylalanine--tRNA ligase alpha subunit.